A 473-amino-acid chain; its full sequence is MNYHSTNVNEIWDACLRILQDIVDERAYRTWFLPIIPVSIEGDTLTLQVPSQFFCEFLEGNFVEQLRTVLGRVIGPNASLQYNALVDNSSPKYPGTVTLAGCADGGQAAEQFDVNLLHRHMPNAATHSEAQDFDTQLNSRLNFRNFYQSECNYVARSVAEAIAASPGNTPMNPFFIYGASGVGKTHLCHALGLRVREMHPRLKVLYVSSHLFEMQFTTAARMGTINDFIAFYQQVDVLIIDDIQWLIGKKKTQLAFFQVFNHLYMLGKQIVLTSDKPPVDLNGMEERLVTRMAGATCVKIERPDLKLRREILQQRTLQSGVRLDESVLNFIAENVCDNVRELEGTLVSLITNSVVVGKEIDLTFAKRIVRQAVRLEKKEVTIECIQQAVSRVFQVQIEQMKSKSRKQDIVQARQVVMFLSKKHTAQSLSAIGELMGGRNHATVLHGCRCVTNEMEMNASFRSSVERAEQLIAN.

The interval 1 to 76 (MNYHSTNVNE…RTVLGRVIGP (76 aa)) is domain I, interacts with DnaA modulators. The domain II stretch occupies residues 76 to 135 (PNASLQYNALVDNSSPKYPGTVTLAGCADGGQAAEQFDVNLLHRHMPNAATHSEAQDFDT). A domain III, AAA+ region region spans residues 136 to 353 (QLNSRLNFRN…GTLVSLITNS (218 aa)). ATP-binding residues include Gly181, Gly183, Lys184, and Thr185. A domain IV, binds dsDNA region spans residues 354-473 (VVVGKEIDLT…VERAEQLIAN (120 aa)).

The protein belongs to the DnaA family. As to quaternary structure, oligomerizes as a right-handed, spiral filament on DNA at oriC.

Its subcellular location is the cytoplasm. Its function is as follows. Plays an essential role in the initiation and regulation of chromosomal replication. ATP-DnaA binds to the origin of replication (oriC) to initiate formation of the DNA replication initiation complex once per cell cycle. Binds the DnaA box (a 9 base pair repeat at the origin) and separates the double-stranded (ds)DNA. Forms a right-handed helical filament on oriC DNA; dsDNA binds to the exterior of the filament while single-stranded (ss)DNA is stabiized in the filament's interior. The ATP-DnaA-oriC complex binds and stabilizes one strand of the AT-rich DNA unwinding element (DUE), permitting loading of DNA polymerase. After initiation quickly degrades to an ADP-DnaA complex that is not apt for DNA replication. Binds acidic phospholipids. The chain is Chromosomal replication initiator protein DnaA from Porphyromonas gingivalis (strain ATCC 33277 / DSM 20709 / CIP 103683 / JCM 12257 / NCTC 11834 / 2561).